Consider the following 372-residue polypeptide: sn-glycerol-3-phosphate import ATP-binding protein UgpC (372 aa).

An ABC transporter domain is found at Leu-2–Ile-233. Residue Gly-35–Ser-42 participates in ATP binding.

This sequence belongs to the ABC transporter superfamily. sn-glycerol-3-phosphate importer (TC 3.A.1.1.3) family. The complex is composed of two ATP-binding proteins (UgpC), two transmembrane proteins (UgpA and UgpE) and a solute-binding protein (UgpB).

It localises to the cell inner membrane. The enzyme catalyses sn-glycerol 3-phosphate(out) + ATP + H2O = sn-glycerol 3-phosphate(in) + ADP + phosphate + H(+). Its function is as follows. Part of the ABC transporter complex UgpBAEC involved in sn-glycerol-3-phosphate (G3P) import. Responsible for energy coupling to the transport system. The protein is sn-glycerol-3-phosphate import ATP-binding protein UgpC of Vibrio cholerae serotype O1 (strain ATCC 39315 / El Tor Inaba N16961).